Consider the following 352-residue polypeptide: MSQKILFIDRDGTLIEEPKSDFQIDTLEKLRFEKDAIPTLLKLKKFGFKFVMVSNQDGLGTPSFPKENFEIAHEKMLDILKSCGIEFQDIFICPHFENENCACRKPKTAMLEEYIKHELYDKEQSFVIGDRESDMILASNLGVRGLKYGALSWKEIENEILSSFRSASYQRTTKETDIKVKVCLNGGKVSIKTGIDFFDHMLEQIAVHGDIGLEISCKGDLEIDEHHSVEDVALALGACIKKALGDKIGIARYGFTLPMDECLASCAMDFCNRPHLVYKAKFKKSHLGALSTEMIEHFFYSLSYAMGVSLHLKVKGKNDHHKAEGLFKAFAKALKMAVKIESENLASSKGVI.

The histidinol-phosphatase stretch occupies residues 1-164 (MSQKILFIDR…EIENEILSSF (164 aa)). The active-site Nucleophile is Asp-9. Positions 9 and 11 each coordinate Mg(2+). Asp-11 serves as the catalytic Proton donor. Zn(2+) is bound by residues Cys-93, His-95, Cys-101, and Cys-103. A Mg(2+)-binding site is contributed by Asp-130. The segment at 165-352 (RSASYQRTTK…ENLASSKGVI (188 aa)) is imidazoleglycerol-phosphate dehydratase.

In the N-terminal section; belongs to the histidinol-phosphatase family. This sequence in the C-terminal section; belongs to the imidazoleglycerol-phosphate dehydratase family. It depends on Mg(2+) as a cofactor. Zn(2+) serves as cofactor.

It localises to the cytoplasm. The catalysed reaction is D-erythro-1-(imidazol-4-yl)glycerol 3-phosphate = 3-(imidazol-4-yl)-2-oxopropyl phosphate + H2O. It catalyses the reaction L-histidinol phosphate + H2O = L-histidinol + phosphate. Its pathway is amino-acid biosynthesis; L-histidine biosynthesis; L-histidine from 5-phospho-alpha-D-ribose 1-diphosphate: step 6/9. It participates in amino-acid biosynthesis; L-histidine biosynthesis; L-histidine from 5-phospho-alpha-D-ribose 1-diphosphate: step 8/9. In Campylobacter jejuni subsp. doylei (strain ATCC BAA-1458 / RM4099 / 269.97), this protein is Histidine biosynthesis bifunctional protein HisB.